The primary structure comprises 468 residues: ATP synthase subunit beta (468 aa).

156-163 is an ATP binding site; that stretch reads GGAGVGKT.

Belongs to the ATPase alpha/beta chains family. In terms of assembly, F-type ATPases have 2 components, CF(1) - the catalytic core - and CF(0) - the membrane proton channel. CF(1) has five subunits: alpha(3), beta(3), gamma(1), delta(1), epsilon(1). CF(0) has three main subunits: a(1), b(2) and c(9-12). The alpha and beta chains form an alternating ring which encloses part of the gamma chain. CF(1) is attached to CF(0) by a central stalk formed by the gamma and epsilon chains, while a peripheral stalk is formed by the delta and b chains.

The protein localises to the cell inner membrane. It carries out the reaction ATP + H2O + 4 H(+)(in) = ADP + phosphate + 5 H(+)(out). In terms of biological role, produces ATP from ADP in the presence of a proton gradient across the membrane. The catalytic sites are hosted primarily by the beta subunits. This is ATP synthase subunit beta from Sulfurimonas denitrificans (strain ATCC 33889 / DSM 1251) (Thiomicrospira denitrificans (strain ATCC 33889 / DSM 1251)).